Here is a 301-residue protein sequence, read N- to C-terminus: MNIVINVDTPTFEQMKSTYQAPGTLPAGAAFHAKLKGVTVTGYTKSHKVMFQGALANQEAARWQPNDAPAPSRSTPAPAGLPAGFATWSVLGSDEVGVGSYFGPLTTAAVFVAADQVASLTQLGVADSKKLTDPEIIRLAKQIMATCPVTYLNLMPAAYNARMKKYNQAQLKALCHNYVLAKTLERLATKPQAILIDQFVSERTYFNYLQGQPQIVSHHVYFQTKGEQAHVAVAAASIVARYQSLKAMDTLSEQAGITLPIGAGHAVDLIAAKLIRKGLDLNQFAKVHFANTQKARQLARQ.

The RNase H type-2 domain occupies 88 to 301 (WSVLGSDEVG…TQKARQLARQ (214 aa)). 3 residues coordinate a divalent metal cation: D94, E95, and D197.

This sequence belongs to the RNase HII family. RnhC subfamily. The cofactor is Mn(2+). It depends on Mg(2+) as a cofactor.

The protein resides in the cytoplasm. It catalyses the reaction Endonucleolytic cleavage to 5'-phosphomonoester.. Its function is as follows. Endonuclease that specifically degrades the RNA of RNA-DNA hybrids. This is Ribonuclease HIII from Limosilactobacillus fermentum (strain NBRC 3956 / LMG 18251) (Lactobacillus fermentum).